A 157-amino-acid polypeptide reads, in one-letter code: SsrA-binding protein (157 aa).

Residues 132 to 157 (KLHDKRETEKKRDWSREKGRLLRSRG) are disordered. The span at 135–151 (DKRETEKKRDWSREKGR) shows a compositional bias: basic and acidic residues.

Belongs to the SmpB family.

It localises to the cytoplasm. Functionally, required for rescue of stalled ribosomes mediated by trans-translation. Binds to transfer-messenger RNA (tmRNA), required for stable association of tmRNA with ribosomes. tmRNA and SmpB together mimic tRNA shape, replacing the anticodon stem-loop with SmpB. tmRNA is encoded by the ssrA gene; the 2 termini fold to resemble tRNA(Ala) and it encodes a 'tag peptide', a short internal open reading frame. During trans-translation Ala-aminoacylated tmRNA acts like a tRNA, entering the A-site of stalled ribosomes, displacing the stalled mRNA. The ribosome then switches to translate the ORF on the tmRNA; the nascent peptide is terminated with the 'tag peptide' encoded by the tmRNA and targeted for degradation. The ribosome is freed to recommence translation, which seems to be the essential function of trans-translation. In Rhodopseudomonas palustris (strain ATCC BAA-98 / CGA009), this protein is SsrA-binding protein.